An 878-amino-acid polypeptide reads, in one-letter code: Alanine--tRNA ligase (878 aa).

4 residues coordinate Zn(2+): H567, H571, C668, and H672.

This sequence belongs to the class-II aminoacyl-tRNA synthetase family. Requires Zn(2+) as cofactor.

It localises to the cytoplasm. The enzyme catalyses tRNA(Ala) + L-alanine + ATP = L-alanyl-tRNA(Ala) + AMP + diphosphate. Its function is as follows. Catalyzes the attachment of alanine to tRNA(Ala) in a two-step reaction: alanine is first activated by ATP to form Ala-AMP and then transferred to the acceptor end of tRNA(Ala). Also edits incorrectly charged Ser-tRNA(Ala) and Gly-tRNA(Ala) via its editing domain. In Magnetococcus marinus (strain ATCC BAA-1437 / JCM 17883 / MC-1), this protein is Alanine--tRNA ligase.